A 197-amino-acid chain; its full sequence is MAKQITSNCNFIFGASDIKSLPNESAPEIAFAGRSNVGKSSLINLLINSKKAARVSSKPGCTRQINFYSMYNDKFRLVDLPGYGYSHAGKEEIIQYLNLIEYYLIQRRNLRRVFVLIDSKVGLKEIDKDFIYWLICNNINFNVVLTKIDKVSQKSLGAVIEDIQRWINNENVSIHQMSIRVKHKITKVRDEFFKFTR.

The 173-residue stretch at 25–197 (SAPEIAFAGR…VRDEFFKFTR (173 aa)) folds into the EngB-type G domain. Residues 33-40 (GRSNVGKS), 60-64 (GCTRQ), 79-82 (DLPG), 146-149 (TKID), and 177-179 (MSI) contribute to the GTP site. Positions 40 and 62 each coordinate Mg(2+).

The protein belongs to the TRAFAC class TrmE-Era-EngA-EngB-Septin-like GTPase superfamily. EngB GTPase family. It depends on Mg(2+) as a cofactor.

Functionally, necessary for normal cell division and for the maintenance of normal septation. This is Probable GTP-binding protein EngB from Wolbachia sp. subsp. Drosophila simulans (strain wRi).